A 391-amino-acid chain; its full sequence is Carbamoyl phosphate synthase small chain (391 aa).

Positions 1–189 (MIKSALLVLE…DLPAAKQPED (189 aa)) are CPSase. Serine 47, glycine 241, and glycine 243 together coordinate L-glutamine. The 188-residue stretch at 193-380 (HVVAYDYGVK…IELIEAYRAS (188 aa)) folds into the Glutamine amidotransferase type-1 domain. Cysteine 269 (nucleophile) is an active-site residue. The L-glutamine site is built by leucine 270, glutamine 273, asparagine 311, glycine 313, and phenylalanine 314. Active-site residues include histidine 353 and glutamate 355.

This sequence belongs to the CarA family. Composed of two chains; the small (or glutamine) chain promotes the hydrolysis of glutamine to ammonia, which is used by the large (or ammonia) chain to synthesize carbamoyl phosphate. Tetramer of heterodimers (alpha,beta)4.

The catalysed reaction is hydrogencarbonate + L-glutamine + 2 ATP + H2O = carbamoyl phosphate + L-glutamate + 2 ADP + phosphate + 2 H(+). The enzyme catalyses L-glutamine + H2O = L-glutamate + NH4(+). The protein operates within amino-acid biosynthesis; L-arginine biosynthesis; carbamoyl phosphate from bicarbonate: step 1/1. Its pathway is pyrimidine metabolism; UMP biosynthesis via de novo pathway; (S)-dihydroorotate from bicarbonate: step 1/3. Its function is as follows. Small subunit of the glutamine-dependent carbamoyl phosphate synthetase (CPSase). CPSase catalyzes the formation of carbamoyl phosphate from the ammonia moiety of glutamine, carbonate, and phosphate donated by ATP, constituting the first step of 2 biosynthetic pathways, one leading to arginine and/or urea and the other to pyrimidine nucleotides. The small subunit (glutamine amidotransferase) binds and cleaves glutamine to supply the large subunit with the substrate ammonia. In Yersinia pestis, this protein is Carbamoyl phosphate synthase small chain.